A 79-amino-acid polypeptide reads, in one-letter code: Conotoxin Vi6.1 (79 aa).

The N-terminal stretch at 1 to 22 (MKLTCVLIITVLFLTASQLITA) is a signal peptide. A propeptide spanning residues 23–47 (DYSRDQRQYRAVRLGDEMRNFKGAR) is cleaved from the precursor. 3 cysteine pairs are disulfide-bonded: Cys-49/Cys-62, Cys-56/Cys-67, and Cys-61/Cys-77. 4-hydroxyproline occurs at positions 60 and 63.

In terms of tissue distribution, expressed by the venom duct.

It is found in the secreted. In terms of biological role, ion channel inhibitor that inhibits the increase in intracellular calcium upon depolarization in DRG neurons. In vivo, both intraperitoneal and intracranial injections into mice induce hyperactivity. This is Conotoxin Vi6.1 from Conus virgo (Virgin cone).